Reading from the N-terminus, the 87-residue chain is MINLLQFQILTEKSINSLESNKYTFKVDKRLNKTQIKEIFEQLFNIKVLNVNTCRSPKSFSRASKRYKSFYKKVILTVESGKLIQFV.

The protein belongs to the universal ribosomal protein uL23 family. In terms of assembly, part of the 50S ribosomal subunit.

The protein localises to the plastid. Its subcellular location is the chloroplast. Binds to 23S rRNA. This is Large ribosomal subunit protein uL23c (rpl23) from Bigelowiella natans (Pedinomonas minutissima).